Consider the following 252-residue polypeptide: 5'-nucleotidase SurE (252 aa).

D8, D9, S39, and N91 together coordinate a divalent metal cation.

It belongs to the SurE nucleotidase family. Requires a divalent metal cation as cofactor.

It is found in the cytoplasm. It carries out the reaction a ribonucleoside 5'-phosphate + H2O = a ribonucleoside + phosphate. Its function is as follows. Nucleotidase that shows phosphatase activity on nucleoside 5'-monophosphates. This Variovorax paradoxus (strain S110) protein is 5'-nucleotidase SurE.